Consider the following 650-residue polypeptide: Chaperone protein DnaK (650 aa).

Threonine 200 is subject to Phosphothreonine; by autocatalysis.

The protein belongs to the heat shock protein 70 family.

Acts as a chaperone. This is Chaperone protein DnaK from Paraburkholderia phytofirmans (strain DSM 17436 / LMG 22146 / PsJN) (Burkholderia phytofirmans).